Consider the following 141-residue polypeptide: Hemoglobin subunit alpha-D (141 aa).

The Globin domain maps to 1–141; that stretch reads MLTAEDKKLI…VSAVLAEKYR (141 aa). Residues H58 and H87 each coordinate heme b.

The protein belongs to the globin family. As to quaternary structure, heterotetramer of two alpha-D chains and two beta chains. Red blood cells.

In terms of biological role, involved in oxygen transport from the lung to the various peripheral tissues. In Meleagris gallopavo (Wild turkey), this protein is Hemoglobin subunit alpha-D (HBAD).